The primary structure comprises 208 residues: Small ribosomal subunit protein uS4 (208 aa).

Positions 98 to 160 (RRLDNVVYRL…SKSKTRFVEI (63 aa)) constitute an S4 RNA-binding domain.

The protein belongs to the universal ribosomal protein uS4 family. As to quaternary structure, part of the 30S ribosomal subunit. Contacts protein S5. The interaction surface between S4 and S5 is involved in control of translational fidelity.

One of the primary rRNA binding proteins, it binds directly to 16S rRNA where it nucleates assembly of the body of the 30S subunit. Its function is as follows. With S5 and S12 plays an important role in translational accuracy. This Caldicellulosiruptor bescii (strain ATCC BAA-1888 / DSM 6725 / KCTC 15123 / Z-1320) (Anaerocellum thermophilum) protein is Small ribosomal subunit protein uS4.